The primary structure comprises 265 residues: uncharacterized protein (265 aa).

Its subcellular location is the mitochondrion. This is an uncharacterized protein from Paramecium tetraurelia.